Consider the following 246-residue polypeptide: MLIKQLSSSYNEYNNNYAASFLIGPLPEGIAQSLGFNIRSVLLKEFPYFAVKNIRFNPENNNYKTHIGTKESIETIINTILGIDFNYSFDFYKAMGLYKSKPKALFQENLSKAKFLCSAKQVGEGILYAKDLMLPVGIKCTTPYKIIAHVTKQNFLGFTFELGFLFGLNNNIKFENKLYSIKTYPIQNINIEIINSKKSFNLNSESIILSFTTKSSLQPIDVIKILSYLLLNKHLILIKAFQQFLD.

It belongs to the RNA polymerase alpha chain family. In plastids the minimal PEP RNA polymerase catalytic core is composed of four subunits: alpha, beta, beta', and beta''. When a (nuclear-encoded) sigma factor is associated with the core the holoenzyme is formed, which can initiate transcription (Potential).

Its subcellular location is the plastid. The catalysed reaction is RNA(n) + a ribonucleoside 5'-triphosphate = RNA(n+1) + diphosphate. DNA-dependent RNA polymerase catalyzes the transcription of DNA into RNA using the four ribonucleoside triphosphates as substrates. This is DNA-directed RNA polymerase subunit alpha (rpoA) from Helicosporidium sp. subsp. Simulium jonesii (Green alga).